A 210-amino-acid polypeptide reads, in one-letter code: Na(+)-translocating NADH-quinone reductase subunit D (210 aa).

The next 6 membrane-spanning stretches (helical) occupy residues Ser-9 to Cys-29, Leu-42 to Ile-62, Ile-72 to Ala-92, Val-103 to Met-123, Phe-131 to Val-151, and Asn-178 to Ile-198.

It belongs to the NqrDE/RnfAE family. In terms of assembly, composed of six subunits; NqrA, NqrB, NqrC, NqrD, NqrE and NqrF.

It is found in the cell inner membrane. It catalyses the reaction a ubiquinone + n Na(+)(in) + NADH + H(+) = a ubiquinol + n Na(+)(out) + NAD(+). Functionally, NQR complex catalyzes the reduction of ubiquinone-1 to ubiquinol by two successive reactions, coupled with the transport of Na(+) ions from the cytoplasm to the periplasm. NqrA to NqrE are probably involved in the second step, the conversion of ubisemiquinone to ubiquinol. The protein is Na(+)-translocating NADH-quinone reductase subunit D of Shewanella piezotolerans (strain WP3 / JCM 13877).